Consider the following 212-residue polypeptide: Large ribosomal subunit protein uL4 (212 aa).

The segment covering 54 to 65 (SQKSRSDVSGSN) has biased composition (polar residues). A disordered region spans residues 54–85 (SQKSRSDVSGSNKKPWRQKGTGRARSGSVKSP).

The protein belongs to the universal ribosomal protein uL4 family. In terms of assembly, part of the 50S ribosomal subunit.

Its function is as follows. One of the primary rRNA binding proteins, this protein initially binds near the 5'-end of the 23S rRNA. It is important during the early stages of 50S assembly. It makes multiple contacts with different domains of the 23S rRNA in the assembled 50S subunit and ribosome. Functionally, forms part of the polypeptide exit tunnel. The chain is Large ribosomal subunit protein uL4 from Blochmanniella floridana.